We begin with the raw amino-acid sequence, 427 residues long: ATP-sensitive inward rectifier potassium channel 12 (427 aa).

At 1–77 (MTAASRANPY…LADMFTTCVD (77 aa)) the chain is on the cytoplasmic side. Cys75 carries the post-translational modification S-nitrosocysteine. Residues 78-104 (IRWRYMLLIFSLAFLASWLLFGIIFWV) traverse the membrane as a helical segment. Arg79 and Arg81 together coordinate a 1,2-diacyl-sn-glycero-3-phospho-(1D-myo-inositol-4,5-bisphosphate). Residues 105 to 129 (IAVAHGDLEPAEGRGRTPCVLQVHG) lie on the Extracellular side of the membrane. Cysteines 123 and 155 form a disulfide. The segment at residues 130 to 146 (FMAAFLFSIETQTTIGY) is an intramembrane region (helical; Pore-forming). Residues Thr143, Ile144, Gly145, and Tyr146 each contribute to the K(+) site. Positions 143 to 148 (TIGYGL) match the Selectivity filter motif. The Extracellular segment spans residues 147-155 (GLRCVTEEC). A helical membrane pass occupies residues 156-183 (PVAVFMVVAQSIVGCIIDSFMIGAIMAK). 2 residues coordinate a 1,2-diacyl-sn-glycero-3-phospho-(1D-myo-inositol-4,5-bisphosphate): Lys183 and Lys188. At 184–427 (MARPKKRAQT…ERPYRRESEI (244 aa)) the chain is on the cytoplasmic side. The segment at 387 to 427 (DEEDEVATDRDGRSPQPEHDFDRLQASSAALERPYRRESEI) is disordered. Residues 393-409 (ATDRDGRSPQPEHDFDR) are compositionally biased toward basic and acidic residues. Residues 425–427 (SEI) carry the PDZ-binding motif.

This sequence belongs to the inward rectifier-type potassium channel (TC 1.A.2.1) family. KCNJ12 subfamily. As to quaternary structure, homotetramer. Forms heteromer with KCNJ4. Can form heteromeric channels with Kir2.6/KCNJ18. Association, via its PDZ-recognition domain, with LIN7A, LIN7B, LIN7C, DLG1, CASK and APBA1 plays a key role in its localization and trafficking. In terms of tissue distribution, highest level in cerebellum.

It localises to the membrane. Its subcellular location is the cell membrane. The protein resides in the sarcolemma. The protein localises to the T-tubule. It catalyses the reaction K(+)(in) = K(+)(out). Activated by phosphatidylinositol 4,5-biphosphate (PtdIns(4,5)P2). PtdIns(4,5)P2 binding to the cytoplasmic side of the channel triggers a conformation change leading to channel opening. Inhibited by Ba(2+). Inward rectifying potassium channel that probably participates in controlling the resting membrane potential in electrically excitable cells. It probably participates in establishing action potential waveform and excitability of neuronal and muscle tissues. Inward rectifier potassium channels are characterized by a greater tendency to allow potassium to flow into the cell rather than out of it. Their voltage dependence is regulated by the concentration of extracellular potassium; as external potassium is raised, the voltage range of the channel opening shifts to more positive voltages. The inward rectification is mainly due to the blockage of outward current by internal magnesium. This is ATP-sensitive inward rectifier potassium channel 12 (Kcnj12) from Mus musculus (Mouse).